The sequence spans 281 residues: Urease accessory protein UreD (281 aa).

It belongs to the UreD family. In terms of assembly, ureD, UreF and UreG form a complex that acts as a GTP-hydrolysis-dependent molecular chaperone, activating the urease apoprotein by helping to assemble the nickel containing metallocenter of UreC. The UreE protein probably delivers the nickel.

Its subcellular location is the cytoplasm. Required for maturation of urease via the functional incorporation of the urease nickel metallocenter. This Pseudomonas savastanoi pv. phaseolicola (strain 1448A / Race 6) (Pseudomonas syringae pv. phaseolicola (strain 1448A / Race 6)) protein is Urease accessory protein UreD.